We begin with the raw amino-acid sequence, 337 residues long: Transaldolase (337 aa).

Residues 1-10 (MSGSPVKRQR) carry the Nuclear localization signal motif. Lysine 142 (schiff-base intermediate with substrate) is an active-site residue. Lysine 219 carries the post-translational modification N6-acetyllysine. A phosphoserine mark is found at serine 237 and serine 256. Residues lysine 269, lysine 286, and lysine 321 each carry the N6-acetyllysine modification.

This sequence belongs to the transaldolase family. Type 1 subfamily. As to quaternary structure, homodimer. Interacts with KPNA1 and KPNA4.

The protein resides in the nucleus. It is found in the cytoplasm. The catalysed reaction is D-sedoheptulose 7-phosphate + D-glyceraldehyde 3-phosphate = D-erythrose 4-phosphate + beta-D-fructose 6-phosphate. Its pathway is carbohydrate degradation; pentose phosphate pathway; D-glyceraldehyde 3-phosphate and beta-D-fructose 6-phosphate from D-ribose 5-phosphate and D-xylulose 5-phosphate (non-oxidative stage): step 2/3. Catalyzes the rate-limiting step of the non-oxidative phase in the pentose phosphate pathway. Catalyzes the reversible conversion of sedheptulose-7-phosphate and D-glyceraldehyde 3-phosphate into erythrose-4-phosphate and beta-D-fructose 6-phosphate. This chain is Transaldolase (TALDO1), found in Sus scrofa (Pig).